The primary structure comprises 381 residues: MSLNMFWFLPTHGDGHYLGTEEGSRPVDHGYLQQIAQAADRLGYTGVLIPTGRSCEDAWLVAASMIPVTQRLKFLVALRPSVTSPTVAARQAATLDRLSNGRALFNLVTGSDPQELAGDGVFLDHSERYEASAEFTQVWRRLLLGETVNFNGKHIHVRGAKLLFPPIQQPYPPLYFGGSSDVAQELAAEQVDLYLTWGEPPELVKEKIEQVRAKAAAHGRKIRFGIRLHVIVRETNDEAWQAAERLISHLDDETIAKAQAAFARTDSVGQQRMAALHNGKRDNLEISPNLWAGVGLVRGGAGTALVGDGPTVAARINEYAALGIDSFVLSGYPHLEEAYRVGELLFPHLDVAIPEIPQPQPLNPQGEAVANDFIPRNVAQS.

The protein belongs to the SsuD family. Homotetramer.

The enzyme catalyses an alkanesulfonate + FMNH2 + O2 = an aldehyde + FMN + sulfite + H2O + 2 H(+). Functionally, catalyzes the desulfonation of aliphatic sulfonates. The polypeptide is Alkanesulfonate monooxygenase (Escherichia coli O6:K15:H31 (strain 536 / UPEC)).